A 273-amino-acid chain; its full sequence is Large ribosomal subunit protein uL2 (273 aa).

2 disordered regions span residues 28–53 (KPFAPLLEKNSKSGGRNNNGRITTRH) and 221–273 (RGTA…RRSK). The segment covering 39 to 48 (KSGGRNNNGR) has biased composition (low complexity). Lys-242 carries the N6-acetyllysine modification.

Belongs to the universal ribosomal protein uL2 family. Part of the 50S ribosomal subunit. Forms a bridge to the 30S subunit in the 70S ribosome.

Functionally, one of the primary rRNA binding proteins. Required for association of the 30S and 50S subunits to form the 70S ribosome, for tRNA binding and peptide bond formation. It has been suggested to have peptidyltransferase activity; this is somewhat controversial. Makes several contacts with the 16S rRNA in the 70S ribosome. This chain is Large ribosomal subunit protein uL2, found in Shigella dysenteriae serotype 1 (strain Sd197).